A 382-amino-acid polypeptide reads, in one-letter code: uncharacterized protein (382 aa).

12 helical membrane-spanning segments follow: residues 14 to 34 (GLLLLTLAIAVLNTLVLLWLA), 45 to 65 (MVSSSYFTGNLVGTLFTGYLI), 75 to 95 (YLASLIFAAGCVGLGVMVGFW), 102 to 122 (FIAGIGCAMIWVVVESALMCS), 131 to 151 (LLAAYMMVYYMGTFLGQLLVS), 157 to 177 (LLHVLPWVTGMILAGILPLLF), 204 to 224 (LGVNGCIISGIVLGSLYGLMP), 231 to 251 (GMANASIGFWMAVLVSAGILG), 270 to 290 (VQVFVVILGSIAMLTQAAMAP), 291 to 311 (ALFILGAAGFTLYPVAMAWAC), 325 to 345 (ALLLSYTVGSLLGPSFAAMLM), and 349 to 369 (SDNLLFIMIASVSFIYLLMLL).

It belongs to the major facilitator superfamily. YcaD (TC 2.A.1.26) family.

The protein resides in the cell inner membrane. This is an uncharacterized protein from Salmonella paratyphi A (strain ATCC 9150 / SARB42).